Here is a 1074-residue protein sequence, read N- to C-terminus: Phospholipase D1 (1074 aa).

Residues Ile81–Ser212 form the PX domain. A PH domain is found at Pro219–Gln328. Residues Cys240 and Cys241 are each lipidated (S-palmitoyl cysteine). The region spanning Tyr459 to Arg486 is the PLD phosphodiesterase 1 domain. A catalytic region spans residues His463 to Ala928. Phosphoserine occurs at positions 499, 561, and 629. Positions Glu891 to Ser918 constitute a PLD phosphodiesterase 2 domain.

Belongs to the phospholipase D family. In terms of assembly, interacts with PIP5K1B. Expressed abundantly in the pancreas and heart and at high levels in brain, placenta, spleen, uterus and small intestine.

The protein localises to the cytoplasm. It is found in the perinuclear region. It localises to the endoplasmic reticulum membrane. The protein resides in the golgi apparatus membrane. Its subcellular location is the late endosome membrane. The enzyme catalyses a 1,2-diacyl-sn-glycero-3-phosphocholine + H2O = a 1,2-diacyl-sn-glycero-3-phosphate + choline + H(+). The catalysed reaction is ethanol + a 1,2-diacyl-sn-glycero-3-phosphocholine = 1,2-diacyl-sn-glycero-3-phosphoethanol + choline. It carries out the reaction 1,2-dihexadecanoyl-sn-glycero-3-phosphocholine + H2O = 1,2-dihexadecanoyl-sn-glycero-3-phosphate + choline + H(+). With respect to regulation, stimulated by phosphatidylinositol 4,5-bisphosphate and phosphatidylinositol 3,4,5-trisphosphate, activated by the phosphokinase C-alpha, by the ADP-ribosylation factor-1 (ARF-1), and to a lesser extent by GTP-binding proteins: RHO A, RAC-1 and CDC42. Inhibited by oleate. Its function is as follows. Function as phospholipase selective for phosphatidylcholine. Implicated as a critical step in numerous cellular pathways, including signal transduction, membrane trafficking, and the regulation of mitosis. May be involved in the regulation of perinuclear intravesicular membrane traffic. The sequence is that of Phospholipase D1 from Homo sapiens (Human).